A 202-amino-acid chain; its full sequence is ATP-dependent Clp protease proteolytic subunit (202 aa).

Ser107 functions as the Nucleophile in the catalytic mechanism. His132 is an active-site residue.

Belongs to the peptidase S14 family. As to quaternary structure, fourteen ClpP subunits assemble into 2 heptameric rings which stack back to back to give a disk-like structure with a central cavity, resembling the structure of eukaryotic proteasomes.

It is found in the cytoplasm. The catalysed reaction is Hydrolysis of proteins to small peptides in the presence of ATP and magnesium. alpha-casein is the usual test substrate. In the absence of ATP, only oligopeptides shorter than five residues are hydrolyzed (such as succinyl-Leu-Tyr-|-NHMec, and Leu-Tyr-Leu-|-Tyr-Trp, in which cleavage of the -Tyr-|-Leu- and -Tyr-|-Trp bonds also occurs).. Functionally, cleaves peptides in various proteins in a process that requires ATP hydrolysis. Has a chymotrypsin-like activity. Plays a major role in the degradation of misfolded proteins. The protein is ATP-dependent Clp protease proteolytic subunit of Shewanella amazonensis (strain ATCC BAA-1098 / SB2B).